The following is a 68-amino-acid chain: Coiled-coil domain-containing protein 179 (68 aa).

The interval 11–68 (SQVNPEGPRQHHPSEVTERQLANKRIQNMQHLKKEKRRLNKRFSRPSPIPEPGLLWSS) is disordered. Basic and acidic residues predominate over residues 18-28 (PRQHHPSEVTE). Residues 27–53 (TERQLANKRIQNMQHLKKEKRRLNKRF) adopt a coiled-coil conformation. The segment covering 41–54 (HLKKEKRRLNKRFS) has biased composition (basic residues).

In Homo sapiens (Human), this protein is Coiled-coil domain-containing protein 179 (CCDC179).